A 277-amino-acid polypeptide reads, in one-letter code: Indole-3-glycerol phosphate synthase (277 aa).

Belongs to the TrpC family.

It carries out the reaction 1-(2-carboxyphenylamino)-1-deoxy-D-ribulose 5-phosphate + H(+) = (1S,2R)-1-C-(indol-3-yl)glycerol 3-phosphate + CO2 + H2O. It functions in the pathway amino-acid biosynthesis; L-tryptophan biosynthesis; L-tryptophan from chorismate: step 4/5. The chain is Indole-3-glycerol phosphate synthase from Pseudomonas putida (strain GB-1).